A 23-amino-acid polypeptide reads, in one-letter code: Laccase-1 (23 aa).

It belongs to the multicopper oxidase family. Requires Cu cation as cofactor.

Its subcellular location is the secreted. The enzyme catalyses 4 hydroquinone + O2 = 4 benzosemiquinone + 2 H2O. With respect to regulation, strongly inhibited by sodium azide, sodium cyanide, Li(+), Sn(+), Hg(2+), and the disulfide-reducing agents beta-mercaptoethanol, dithiothreitol and thioglycolic acid. Moderately inhibited by Mn(2+) and Fe(2+), inhibition by these metal ions is stronger at 0.1 mM than at 1 mM. Moderately inhibited by Cu(2+). Lignin degradation and detoxification of lignin-derived products. Demethylates eucalyptus hard wood lignin. Has high activity against the non-phenolic heterocyclic compound ABTS, and lower activity against the phenolic substrates syringic acid, caffeic acid, syringaldazine, vanillic acid, catechol and levodihydroxyphenylalanine. The chain is Laccase-1 from Galerina sp.